The chain runs to 94 residues: Antitoxin HipB (94 aa).

One can recognise an HTH cro/C1-type domain in the interval 23 to 77; that stretch reads MKLVRQQNGWTQSELAKKIGIKQATISNFENNPDNTSLTTFFKILQSLELSMTLC. The segment at residues 34–53 is a DNA-binding region (H-T-H motif); the sequence is QSELAKKIGIKQATISNFEN.

In terms of assembly, homodimer. Forms a HipA(2)HipB(2) heterotetramer which can interact with DNA. This complex also blocks the toxic activity of HipA.

Functionally, antitoxin component of a type II type II toxin-antitoxin (TA) system. Neutralizes the toxic effect of cognate toxin HipA. Represses the hipBA operon promoter. The sequence is that of Antitoxin HipB (hipB) from Escherichia coli O6:H1 (strain CFT073 / ATCC 700928 / UPEC).